We begin with the raw amino-acid sequence, 212 residues long: Eggshell protein 1 (212 aa).

An N-terminal signal peptide occupies residues 1–27; sequence MKSSLTLLFLAAIGYTIAYPPPSDYDS. Positions 155-212 are disordered; the sequence is RKNGHGKGGKGGNGGGGGKGGGKGGGNGKGNGKGGGGKNGGGKGGNGGKGGSYAPSYY. The span at 163-205 shows a compositional bias: gly residues; it reads GKGGNGGGGGKGGGKGGGNGKGNGKGGGGKNGGGKGGNGGKGG.

Detected only in mature female parasites.

The polypeptide is Eggshell protein 1 (ESG-1) (Schistosoma japonicum (Blood fluke)).